The following is a 336-amino-acid chain: Delta(1)-pyrroline-2-carboxylate reductase (336 aa).

Residue S47 is the Charge relay system of the active site. The Proton donor role is filled by H48. R52 contributes to the substrate binding site. Position 120 to 124 (H120 to L124) interacts with NADP(+). Residue T160 participates in substrate binding. An NADP(+)-binding site is contributed by D178–A180. Position 186 to 187 (R186 to G187) interacts with substrate. The active-site Charge relay system is D188. Residues H229–K230 and R304–R310 contribute to the NADP(+) site.

The protein belongs to the LDH2/MDH2 oxidoreductase family. As to quaternary structure, homodimer.

It carries out the reaction L-proline + NAD(+) = 1-pyrroline-2-carboxylate + NADH + H(+). The catalysed reaction is L-proline + NADP(+) = 1-pyrroline-2-carboxylate + NADPH + H(+). Its function is as follows. Catalyzes the reduction of Delta(1)-pyrroline-2-carboxylate (Pyr2C) to L-proline, using NADPH as the electron donor. May be involved in a degradation pathway that converts trans-3-hydroxy-L-proline (t3LHyp) to L-proline. The sequence is that of Delta(1)-pyrroline-2-carboxylate reductase from Pseudomonas fluorescens (strain ATCC BAA-477 / NRRL B-23932 / Pf-5).